Here is a 351-residue protein sequence, read N- to C-terminus: Ceramide hydroxylase (351 aa).

4 helical membrane-spanning segments follow: residues 26-46 (AAIY…GFLI), 47-67 (AATT…MLAL), 141-161 (GFLF…AILI), and 204-224 (VACW…VVPV).

The protein belongs to the fatty acid desaturase type 1 family.

The protein localises to the cell inner membrane. Its pathway is lipid metabolism; sphingolipid metabolism. Its function is as follows. Involved in de novo bacterial ceramide synthesis. The sequence is that of Ceramide hydroxylase from Caulobacter vibrioides (strain NA1000 / CB15N) (Caulobacter crescentus).